An 85-amino-acid chain; its full sequence is Large ribosomal subunit protein bL27 (85 aa).

Residues 1 to 20 (MAHKKGASSSRNGRDSNAQR) form a disordered region. Residues 7 to 19 (ASSSRNGRDSNAQ) show a composition bias toward polar residues.

Belongs to the bacterial ribosomal protein bL27 family.

The sequence is that of Large ribosomal subunit protein bL27 from Kineococcus radiotolerans (strain ATCC BAA-149 / DSM 14245 / SRS30216).